A 1233-amino-acid polypeptide reads, in one-letter code: ATP-dependent helicase/nuclease subunit A (1233 aa).

The UvrD-like helicase ATP-binding domain occupies 3 to 474; sequence TKWTEEQKQA…ILLYKNFRSR (472 aa). Residue 24 to 31 coordinates ATP; the sequence is AAAGSGKT. The UvrD-like helicase C-terminal domain occupies 518–809; it reads VTGGAVELHL…RIMSIHKSKG (292 aa). The interval 533-555 is disordered; sequence VEEEVEEKEEEKNEEKDFEEEEE.

It belongs to the helicase family. AddA subfamily. Heterodimer of AddA and AddB/RexB. Mg(2+) is required as a cofactor.

The enzyme catalyses Couples ATP hydrolysis with the unwinding of duplex DNA by translocating in the 3'-5' direction.. It carries out the reaction ATP + H2O = ADP + phosphate + H(+). Its function is as follows. The heterodimer acts as both an ATP-dependent DNA helicase and an ATP-dependent, dual-direction single-stranded exonuclease. Recognizes the chi site generating a DNA molecule suitable for the initiation of homologous recombination. The AddA nuclease domain is required for chi fragment generation; this subunit has the helicase and 3' -&gt; 5' nuclease activities. The chain is ATP-dependent helicase/nuclease subunit A from Thermoanaerobacter sp. (strain X514).